Reading from the N-terminus, the 200-residue chain is FMN-dependent NADH:quinone oxidoreductase (200 aa).

FMN is bound by residues S10 and M95–F98.

Belongs to the azoreductase type 1 family. In terms of assembly, homodimer. It depends on FMN as a cofactor.

The catalysed reaction is 2 a quinone + NADH + H(+) = 2 a 1,4-benzosemiquinone + NAD(+). The enzyme catalyses N,N-dimethyl-1,4-phenylenediamine + anthranilate + 2 NAD(+) = 2-(4-dimethylaminophenyl)diazenylbenzoate + 2 NADH + 2 H(+). In terms of biological role, quinone reductase that provides resistance to thiol-specific stress caused by electrophilic quinones. Its function is as follows. Also exhibits azoreductase activity. Catalyzes the reductive cleavage of the azo bond in aromatic azo compounds to the corresponding amines. The protein is FMN-dependent NADH:quinone oxidoreductase of Alteromonas mediterranea (strain DSM 17117 / CIP 110805 / LMG 28347 / Deep ecotype).